Reading from the N-terminus, the 420-residue chain is MDVLSVSEINAQIKALLEATFLQVRVQGEVSNLTIHKVSGHAYFSLKDSQSVIRCVLFKGNANRLKFALKEGQEMVVFGGISVYVPRGDYQINCFEIEPKEIGSLTLALEQLKEKLRLKGYFDKENKLPKPHFPKRVAVITSQNSAAWADMQKIASKRWPICELVCINTLMQGEGCVQSVVESIAYADSFHDTRNAFDAIVVARGGGSMEDLYSFNDEKIADALYLAKTFSMSAIGHESDFLLSDLVADLRASTPSNAMEILLPSSDEWLQRLDGFNVKLHRSFKILLHQKKAHLEHLADFLKRLSFENKHHLNALKLEQLKIALENKTLEFLRFKKTLLEKISTQALTSPFLQTKTERLNRLENALKLAHANLKLPQFGAFLSKNNQAIELEALKAGDKIELSNEKARASAEILSVDRV.

This sequence belongs to the XseA family. In terms of assembly, heterooligomer composed of large and small subunits.

It is found in the cytoplasm. It catalyses the reaction Exonucleolytic cleavage in either 5'- to 3'- or 3'- to 5'-direction to yield nucleoside 5'-phosphates.. In terms of biological role, bidirectionally degrades single-stranded DNA into large acid-insoluble oligonucleotides, which are then degraded further into small acid-soluble oligonucleotides. This is Exodeoxyribonuclease 7 large subunit from Helicobacter pylori (strain HPAG1).